A 551-amino-acid chain; its full sequence is uncharacterized protein (551 aa).

Residues 1-7 lie on the Cytoplasmic side of the membrane; that stretch reads MKKNSSV. A helical transmembrane segment spans residues 8-28; that stretch reads VFFLVGLSQFVTMAFLIIGSI. Residues 29-88 lie on the Vacuolar side of the membrane; the sequence is TAPIFKQIGYSKYDEITYGTFGYCKEGSCSKASYNYHPDELSDSDSNWKLNSNARSILGK. A helical transmembrane segment spans residues 89 to 109; the sequence is IIFITPIAAGLNFLGFLCTIM. Topologically, residues 110-135 are cytoplasmic; it reads SVLLINVLSSDRVGSASAIMFFVNLT. Residues 136–156 form a helical membrane-spanning segment; the sequence is FSTLGFLSASLICIVVFLLFY. The Vacuolar segment spans residues 157–160; the sequence is PHVT. The helical transmembrane segment at 161 to 181 threads the bilayer; the sequence is WCSWVLIPGAALSLLVIPLIF. Residues 182 to 551 lie on the Cytoplasmic side of the membrane; it reads SAYSRSSGSR…TSLNNPYGFR (370 aa). Phosphoserine occurs at positions 224 and 232. The disordered stretch occupies residues 280 to 341; the sequence is AKDMENSNGS…NGSNTSNNIN (62 aa). Polar residues predominate over residues 307-320; the sequence is TSTYSVIESESGLK. Residues 321 to 341 are compositionally biased toward low complexity; it reads NGSVSNNYVRNNGSNTSNNIN. Ser-363 carries the phosphoserine modification.

As to quaternary structure, forms homo dimers or homooligomers in MCC microdomains. Interacts with BOI2 and RHO3, two key regulators of secretion.

Its subcellular location is the vacuole membrane. The protein resides in the cell membrane. Functionally, protein involved in secretion and cell wall organization. Contributes to cell surface-related functions as a auxiliary component of MCC/eisosome that specifically interacts with the secretory pathway. This is an uncharacterized protein from Saccharomyces cerevisiae (strain ATCC 204508 / S288c) (Baker's yeast).